The primary structure comprises 367 residues: Putative S-adenosyl-L-methionine-dependent methyltransferase MT0751 (367 aa).

Residues Asp137 and 166–167 (DL) each bind S-adenosyl-L-methionine. The span at 348-358 (TRSDAHQASTT) shows a compositional bias: polar residues. Residues 348 to 367 (TRSDAHQASTTAPPPPGLTG) are disordered.

The protein belongs to the UPF0677 family.

Its function is as follows. Exhibits S-adenosyl-L-methionine-dependent methyltransferase activity. This is Putative S-adenosyl-L-methionine-dependent methyltransferase MT0751 from Mycobacterium tuberculosis (strain CDC 1551 / Oshkosh).